The following is a 1026-amino-acid chain: Multidrug resistance protein MdtC (1026 aa).

Helical transmembrane passes span 15-35 (ILIA…LPVA), 333-353 (EVEE…FLFL), 360-380 (LIPA…MYLC), 387-407 (LSLM…IVVL), 431-451 (VGFT…PLLL), 463-483 (FAVT…TLTP), 528-548 (LVGV…IAIP), 853-873 (LILI…LYES), 897-917 (LFNA…IGIV), 953-973 (PIMM…LSDG), and 984-1004 (ITIV…TPVV).

Belongs to the resistance-nodulation-cell division (RND) (TC 2.A.6) family. MdtC subfamily. In terms of assembly, part of a tripartite efflux system composed of MdtA, MdtB and MdtC. MdtC forms a heteromultimer with MdtB.

The protein resides in the cell inner membrane. The sequence is that of Multidrug resistance protein MdtC from Salmonella heidelberg (strain SL476).